The chain runs to 188 residues: Elongation factor P (188 aa).

Belongs to the elongation factor P family.

It localises to the cytoplasm. Its pathway is protein biosynthesis; polypeptide chain elongation. Functionally, involved in peptide bond synthesis. Stimulates efficient translation and peptide-bond synthesis on native or reconstituted 70S ribosomes in vitro. Probably functions indirectly by altering the affinity of the ribosome for aminoacyl-tRNA, thus increasing their reactivity as acceptors for peptidyl transferase. In Streptomyces coelicolor (strain ATCC BAA-471 / A3(2) / M145), this protein is Elongation factor P.